Here is a 230-residue protein sequence, read N- to C-terminus: 7-cyano-7-deazaguanine synthase (230 aa).

7–17 (CSGGLDSVSLA) lines the ATP pocket. Zn(2+) contacts are provided by cysteine 185, cysteine 193, cysteine 196, and cysteine 199.

Belongs to the QueC family. The cofactor is Zn(2+).

It catalyses the reaction 7-carboxy-7-deazaguanine + NH4(+) + ATP = 7-cyano-7-deazaguanine + ADP + phosphate + H2O + H(+). Its pathway is purine metabolism; 7-cyano-7-deazaguanine biosynthesis. Functionally, catalyzes the ATP-dependent conversion of 7-carboxy-7-deazaguanine (CDG) to 7-cyano-7-deazaguanine (preQ(0)). This is 7-cyano-7-deazaguanine synthase from Ruegeria pomeroyi (strain ATCC 700808 / DSM 15171 / DSS-3) (Silicibacter pomeroyi).